The chain runs to 408 residues: ORC1-type DNA replication protein 15 (408 aa).

ATP is bound by residues 60-64, Y208, and R220; that span reads VGKTA.

It belongs to the CDC6/cdc18 family.

In terms of biological role, involved in regulation of DNA replication. This is ORC1-type DNA replication protein 15 (cdc6o) from Haloarcula marismortui (strain ATCC 43049 / DSM 3752 / JCM 8966 / VKM B-1809) (Halobacterium marismortui).